Here is a 159-residue protein sequence, read N- to C-terminus: MSTKAIYPGTFDPITNGHIDIITRAASMFDRVILAIAASPSKKPMFDLEERVALATTALQHLPNVEVMGFSDLMANFARAQQANILIRGLRAVADFEYEMQLAHMNRHLMPELESVFLMPSKEWSFISSSLVKEVARHAGDVTHFLPANVHQALMEKLK.

Thr10 provides a ligand contact to substrate. ATP-binding positions include 10–11 and His18; that span reads TF. The substrate site is built by Lys42, Met74, and Arg88. Residues 89–91, Glu99, and 124–130 each bind ATP; these read GLR and WSFISSS.

The protein belongs to the bacterial CoaD family. As to quaternary structure, homohexamer. Requires Mg(2+) as cofactor.

Its subcellular location is the cytoplasm. It carries out the reaction (R)-4'-phosphopantetheine + ATP + H(+) = 3'-dephospho-CoA + diphosphate. Its pathway is cofactor biosynthesis; coenzyme A biosynthesis; CoA from (R)-pantothenate: step 4/5. Reversibly transfers an adenylyl group from ATP to 4'-phosphopantetheine, yielding dephospho-CoA (dPCoA) and pyrophosphate. The sequence is that of Phosphopantetheine adenylyltransferase from Enterobacter sp. (strain 638).